The following is an 87-amino-acid chain: Phosphoribosyl-ATP pyrophosphatase (87 aa).

The protein belongs to the PRA-PH family.

The protein resides in the cytoplasm. The enzyme catalyses 1-(5-phospho-beta-D-ribosyl)-ATP + H2O = 1-(5-phospho-beta-D-ribosyl)-5'-AMP + diphosphate + H(+). It participates in amino-acid biosynthesis; L-histidine biosynthesis; L-histidine from 5-phospho-alpha-D-ribose 1-diphosphate: step 2/9. This chain is Phosphoribosyl-ATP pyrophosphatase, found in Kocuria rhizophila (strain ATCC 9341 / DSM 348 / NBRC 103217 / DC2201).